A 770-amino-acid polypeptide reads, in one-letter code: MEKRAAAGLEGAPGARAQLAVVCLVNIFLTGRLSSAVPALAACSGKLEQHTERRGVIYSPAWPLNYPPGTNCSWYIQGDRGDMITISFRNFDVEESHQCSLDWLLLGPAAPPRQEAFRLCGSAIPPAFISARDHVWIFFHSDASSSGQAQGFRLSYIRGKLGQASCQADEFRCDNGKCLPGPWQCNTVDECGDGSDEGNCSAPASEPPGSLCPGGTFPCSGARSTRCLPVERRCDGLQDCGDGSDEAGCPDLACGRRLGSFYGSFASPDLFGAARGPSDLHCTWLVDTQDSRRVLLQLELRLGYDDYVQVYEGLGERGDRLLQTLSYRSNHRPVSLEAAQGRLTVAYHARARSAGHGFNATYQVKGYCLPWEQPCGSSSDSDGGSLGDQGCFSEPQRCDGWWHCASGRDEQGCPACPPDQYPCEGGSGLCYTPADRCNNQKSCPDGADEKNCFSCQPGTFHCGTNLCIFETWRCDGQEDCQDGSDEHGCLAAVPRKVITAALIGSLVCGLLLVIALGCAFKLYSLRTQEYRAFETQMTRLEAEFVRREAPPSYGQLIAQGLIPPVEDFPVYSASQASVLQNLRTAMRRQMRRHASRRGPSRRRLGRLWNRLFHRPRAPRGQIPLLTAARPSQTVLGDGFLQPAPGAAPDPPAPLMDTGSTRAAGDRPPSAPGRAPEVGPSGPPLPSGLRDPECRPVDKDRKVCREPLVDGPAPADAPREPCSAQDPHPQVSTASSTLGPHSPEPLGVCRNPPPPCSPMLEASDDEALLVC.

Residues 1–36 (MEKRAAAGLEGAPGARAQLAVVCLVNIFLTGRLSSA) form the signal peptide. Residues 37-496 (VPALAACSGK…HGCLAAVPRK (460 aa)) lie on the Extracellular side of the membrane. Disulfide bonds link Cys-43–Cys-72, Cys-99–Cys-120, Cys-166–Cys-178, Cys-173–Cys-191, Cys-185–Cys-200, Cys-212–Cys-227, Cys-219–Cys-240, Cys-234–Cys-249, and Cys-254–Cys-282. A CUB 1 domain is found at 43-159 (CSGKLEQHTE…QGFRLSYIRG (117 aa)). N-linked (GlcNAc...) asparagine glycosylation is present at Asn-71. LDL-receptor class A domains are found at residues 165–201 (SCQADEFRCDNGKCLPGPWQCNTVDECGDGSDEGNCS) and 211–250 (LCPGGTFPCSGARSTRCLPVERRCDGLQDCGDGSDEAGCP). The N-linked (GlcNAc...) asparagine glycan is linked to Asn-199. Residues 254 to 365 (CGRRLGSFYG…HGFNATYQVK (112 aa)) enclose the CUB 2 domain. Residue Asn-359 is glycosylated (N-linked (GlcNAc...) asparagine). LDL-receptor class A domains lie at 415–453 (ACPPDQYPCEGGSGLCYTPADRCNNQKSCPDGADEKNCF) and 454–490 (SCQPGTFHCGTNLCIFETWRCDGQEDCQDGSDEHGCL). Cystine bridges form between Cys-416–Cys-430, Cys-423–Cys-443, Cys-437–Cys-452, Cys-455–Cys-467, Cys-462–Cys-480, and Cys-474–Cys-489. A helical membrane pass occupies residues 497 to 517 (VITAALIGSLVCGLLLVIALG). Residues 518-770 (CAFKLYSLRT…ASDDEALLVC (253 aa)) are Cytoplasmic-facing. Positions 635-770 (LGDGFLQPAP…ASDDEALLVC (136 aa)) are disordered. The segment covering 689–707 (RDPECRPVDKDRKVCREPL) has biased composition (basic and acidic residues). The span at 729 to 738 (QVSTASSTLG) shows a compositional bias: polar residues. The span at 761–770 (ASDDEALLVC) shows a compositional bias: acidic residues.

Belongs to the LDLR family. In terms of assembly, binds GGA1 and GGA2. In terms of tissue distribution, widely expressed. Highly expressed in skeletal muscle and ovary. Expressed at intermediate level in heart, brain, liver, pancreas, prostate and small intestine. Weakly expressed in testis, colon and leukocyte.

It localises to the membrane. The protein resides in the coated pit. Probable receptor, which may be involved in the internalization of lipophilic molecules and/or signal transduction. Its precise role is however unclear, since it does not bind to very low density lipoprotein (VLDL) or to LRPAP1 in vitro. The protein is Low-density lipoprotein receptor-related protein 3 (LRP3) of Homo sapiens (Human).